The sequence spans 200 residues: Transgelin (200 aa).

Residue Ala-2 is modified to N-acetylalanine. The 114-residue stretch at 24-137 (DELEDRLVEW…RTLVALGSLA (114 aa)) folds into the Calponin-homology (CH) domain. The Calponin-like repeat unit spans residues 175 to 199 (IGLQMGTNKGASQAGMSYGRPRQII).

It belongs to the calponin family. Monomer. Gizzard, uterus, intestine, esophagus, aorta, and trace amounts in brain, liver and heart.

Its subcellular location is the cytoplasm. Actin cross-linking/gelling protein. The chain is Transgelin (TAGLN) from Gallus gallus (Chicken).